Here is a 178-residue protein sequence, read N- to C-terminus: Large ribosomal subunit protein uL6 (178 aa).

The protein belongs to the universal ribosomal protein uL6 family. In terms of assembly, part of the 50S ribosomal subunit.

This protein binds to the 23S rRNA, and is important in its secondary structure. It is located near the subunit interface in the base of the L7/L12 stalk, and near the tRNA binding site of the peptidyltransferase center. In Limosilactobacillus reuteri (strain DSM 20016) (Lactobacillus reuteri), this protein is Large ribosomal subunit protein uL6.